We begin with the raw amino-acid sequence, 416 residues long: Phosphoglycerate kinase (416 aa).

V23, D24, F25, N26, N38, R39, S62, H63, G65, R66, L121, R122, H169, and R170 together coordinate (2R)-3-phosphoglycerate. G213 contacts ADP. G213 is a CDP binding site. AMP is bound by residues A214 and K215. Residues A214 and K215 each contribute to the ATP site. A Mg(2+)-binding site is contributed by A214. CDP is bound at residue D218. Position 218 (D218) interacts with Mg(2+). Residue K219 coordinates AMP. K219 contacts ATP. G237 provides a ligand contact to ADP. A CDP-binding site is contributed by G237. AMP is bound by residues G238 and G312. ATP contacts are provided by G238 and G312. CDP is bound by residues G337 and F342. An ADP-binding site is contributed by F342. E343 lines the AMP pocket. D374 contacts Mg(2+). T375 contacts ATP.

Belongs to the phosphoglycerate kinase family. In terms of assembly, monomer. The cofactor is Mg(2+).

The enzyme catalyses (2R)-3-phosphoglycerate + ATP = (2R)-3-phospho-glyceroyl phosphate + ADP. Its pathway is carbohydrate degradation; glycolysis; pyruvate from D-glyceraldehyde 3-phosphate: step 2/5. This is Phosphoglycerate kinase (PGK) from Plasmodium falciparum (isolate 3D7).